A 515-amino-acid chain; its full sequence is 2-isopropylmalate synthase (515 aa).

One can recognise a Pyruvate carboxyltransferase domain in the interval 4–264 (VKIFDTTLRD…NIGINQDTTQ (261 aa)). Mn(2+)-binding residues include D13, H201, H203, and N237. Residues 390–515 (ELDYLSVNTG…RQTTSAQEGI (126 aa)) are regulatory domain.

The protein belongs to the alpha-IPM synthase/homocitrate synthase family. LeuA type 1 subfamily. Homodimer. Mn(2+) serves as cofactor.

It localises to the cytoplasm. It carries out the reaction 3-methyl-2-oxobutanoate + acetyl-CoA + H2O = (2S)-2-isopropylmalate + CoA + H(+). It functions in the pathway amino-acid biosynthesis; L-leucine biosynthesis; L-leucine from 3-methyl-2-oxobutanoate: step 1/4. Its function is as follows. Catalyzes the condensation of the acetyl group of acetyl-CoA with 3-methyl-2-oxobutanoate (2-ketoisovalerate) to form 3-carboxy-3-hydroxy-4-methylpentanoate (2-isopropylmalate). In Halothermothrix orenii (strain H 168 / OCM 544 / DSM 9562), this protein is 2-isopropylmalate synthase.